Here is a 115-residue protein sequence, read N- to C-terminus: Large ribosomal subunit protein bL20c (115 aa).

This sequence belongs to the bacterial ribosomal protein bL20 family.

It localises to the plastid. The protein localises to the chloroplast. In terms of biological role, binds directly to 23S ribosomal RNA and is necessary for the in vitro assembly process of the 50S ribosomal subunit. It is not involved in the protein synthesizing functions of that subunit. The sequence is that of Large ribosomal subunit protein bL20c from Cycas taitungensis (Prince sago).